The sequence spans 271 residues: MDNEGIGLYPLHRCKTIHLVRHAQGIHNVAGEKDHSAYSSEDYFDAHLTPLGWQQVDNLRNHVRAAQLLNKVELVIVSPMLRTIQTAVGAFGGEEDTNGADATPLMVANAGSSDRPAISSLNSPPFLAVELCRETMGDHPCDRRRSVTEYKALFPAIDFSIIETDNDVLWKPSPRESLEEVAARGVEFIKWIWTRKEKEIAIVSHSGFLHGLLSSFGKDCCDDLKKELSIHLSNCELRSMVIVDRGNLGTDSAETTNYPGKVPEGLDNPSG.

His22 serves as the catalytic Tele-phosphohistidine intermediate. Residue Glu134 is the Proton donor/acceptor of the active site. The interval 252–271 (SAETTNYPGKVPEGLDNPSG) is disordered.

The protein belongs to the phosphoglycerate mutase family. In terms of tissue distribution, expressed in the shoot apical meristem and meristematic zone of the root tips.

May play a role in carbohydrates metabolism. The polypeptide is Phosphoglycerate mutase-like protein (Arabidopsis thaliana (Mouse-ear cress)).